Reading from the N-terminus, the 161-residue chain is MAINSSGTKVLSFVRSVWQDFVNTNGFDAHVVSDIQIISAVPGFVECSLKLQKHHLNRMGNLHGGCIAALTDLGGSLALASRGLFISGVSIDMNQTFLQSGGTLGSSILLHAKCDRLGSNIAFTSVDFLTSSNEVFAKGRHTKFVRNALGDPRNCLDLAED.

It belongs to the thioesterase PaaI family.

This chain is Putative esterase C31F10.02, found in Schizosaccharomyces pombe (strain 972 / ATCC 24843) (Fission yeast).